The primary structure comprises 122 residues: Fluoride-specific ion channel FluC 2 (122 aa).

4 helical membrane-spanning segments follow: residues 4 to 24 (VAVW…RFVV), 38 to 58 (LGTL…GGLA), 63 to 83 (AALL…TWML), and 96 to 116 (AALA…FIGQ). Na(+) is bound by residues G73 and T76.

It belongs to the fluoride channel Fluc/FEX (TC 1.A.43) family.

It is found in the cell membrane. The catalysed reaction is fluoride(in) = fluoride(out). With respect to regulation, na(+) is not transported, but it plays an essential structural role and its presence is essential for fluoride channel function. In terms of biological role, fluoride-specific ion channel. Important for reducing fluoride concentration in the cell, thus reducing its toxicity. The chain is Fluoride-specific ion channel FluC 2 from Mycolicibacterium paratuberculosis (strain ATCC BAA-968 / K-10) (Mycobacterium paratuberculosis).